A 141-amino-acid polypeptide reads, in one-letter code: Hemoglobin subunit alpha-D (141 aa).

The Globin domain maps to 1 to 141 (MLTAEDKKLI…VAAVLAEKYR (141 aa)). Heme b contacts are provided by His58 and His87.

Belongs to the globin family. In terms of assembly, heterotetramer of two alpha-D chains and two beta chains. Red blood cells.

Its function is as follows. Involved in oxygen transport from the lung to the various peripheral tissues. The sequence is that of Hemoglobin subunit alpha-D (HBAD) from Apus apus (Common swift).